The chain runs to 568 residues: Urease subunit alpha (568 aa).

The Urease domain occupies 132–568 (GAIDTHVHYI…LPLAQLYNLF (437 aa)). Ni(2+) contacts are provided by H137, H139, and K219. At K219 the chain carries N6-carboxylysine. H221 serves as a coordination point for substrate. Residues H248 and H274 each contribute to the Ni(2+) site. Residue H322 is the Proton donor of the active site. D362 is a Ni(2+) binding site.

This sequence belongs to the metallo-dependent hydrolases superfamily. Urease alpha subunit family. Heterotrimer of UreA (gamma), UreB (beta) and UreC (alpha) subunits. Three heterotrimers associate to form the active enzyme. Requires Ni cation as cofactor. Carboxylation allows a single lysine to coordinate two nickel ions.

The protein resides in the cytoplasm. The enzyme catalyses urea + 2 H2O + H(+) = hydrogencarbonate + 2 NH4(+). The protein operates within nitrogen metabolism; urea degradation; CO(2) and NH(3) from urea (urease route): step 1/1. This Azobacteroides pseudotrichonymphae genomovar. CFP2 protein is Urease subunit alpha.